A 73-amino-acid chain; its full sequence is SIFamide-related peptide (73 aa).

The N-terminal stretch at 1-23 (MVSIRLTFALAIVAIIFAFSVDA) is a signal peptide. F35 carries the phenylalanine amide modification. Residues 39 to 73 (SNTMTDYEFTSRALSAICEVASETCTAWMSRQESN) constitute a propeptide that is removed on maturation.

In terms of tissue distribution, expressed in brain, the retrocerebral complex and in ventral, thoracic and abdominal ganglia (at protein level).

Its subcellular location is the secreted. The chain is SIFamide-related peptide from Camponotus floridanus (Florida carpenter ant).